The following is a 421-amino-acid chain: Replication-associated recombination protein A (421 aa).

45–52 (GPPGIGKT) contacts ATP.

This sequence belongs to the AAA ATPase family. RarA/MGS1/WRNIP1 subfamily. Homotetramer. Interacts with single-stranded binding protein SsbA. May interact with PriA.

The protein localises to the cytoplasm. Its subcellular location is the nucleoid. SsDNA-dependent ATP hydrolysis is stimulated by single-stranded binding protein SsbA but not by SsbB; in the presence of SsbB, ssDNA secondary structure is removed and RarA's ATPase activity is decreased. The C-terminal 9 residues of SsbA are sufficient to stimulate ATPase activity. Its function is as follows. Plays a role in recombination-dependent DNA replication. Positively affects the formation of RecA threads during response to DNA damage, directly or indirectly counteracting the negative RecA modulators RecX and RecU. Stabilizes a RecA-ssDNA complex. In vitro, in the presence of SsbA, inhibits PriA-dependent DNA replication restart of both leading and lagging strands; elongation is insensitive to RarA. Plays a role in response to DNA damage, localizes to the replication fork but also to DNA elsewhere in the cell. Probably required for repair of single-stranded nicks generated by H(2)O(2). Epistatic to RecA, partially represses deletions of the error-prone translesion DNA polymerases (dinB1 and dinB2), genetically interacts with replicative helicase loaders dnaB and dnaD. Epistatic to recF and recO mutations upon DNA damage. A DNA-dependent ATPase stimulated by hairpin structures in circular single-stranded (ss)DNA or ssDNA-dsDNA junctions, by blunt end and 5'-tailed dsDNA and by single-stranded binding protein SsbA protein bound to ssDNA. Preferentially binds ssDNA and replication-fork structures; SsbA stimulates binding to ssDNA. Addition of ATP to the protein has no visible effect in vitro. The sequence is that of Replication-associated recombination protein A from Bacillus subtilis (strain 168).